We begin with the raw amino-acid sequence, 337 residues long: Protein LEG1 homolog (337 aa).

The N-terminal stretch at methionine 1 to alanine 20 is a signal peptide. Residue asparagine 171 is glycosylated (N-linked (GlcNAc...) asparagine).

The protein belongs to the LEG1 family.

It is found in the secreted. May be involved in early liver development. The chain is Protein LEG1 homolog from Mus musculus (Mouse).